The following is a 636-amino-acid chain: Endoglucanase 4 (636 aa).

The signal sequence occupies residues 1 to 25 (MTRRWSFLVQCFTFKKKEGVRSRYM). Asp-82 acts as the Nucleophile in catalysis. Catalysis depends on residues His-400, Asp-438, and Glu-447. The CBM3 domain maps to 478–635 (KVEDEFFVEA…GDLVFGTLPN (158 aa)).

Belongs to the glycosyl hydrolase 9 (cellulase E) family.

The protein localises to the secreted. The catalysed reaction is Endohydrolysis of (1-&gt;4)-beta-D-glucosidic linkages in cellulose, lichenin and cereal beta-D-glucans.. This Bacillus sp. (strain KSM-522) protein is Endoglucanase 4.